Consider the following 439-residue polypeptide: Fibulin-7 (439 aa).

The N-terminal stretch at 1-24 (MVPSSPRALFLLLLILACPEPRAS) is a signal peptide. A coiled-coil region spans residues 28-53 (LSKQQLLSAIRQLQQLLKGQETRFAE). The 58-residue stretch at 79–136 (VSCPALNTPADGRKFGSKYLVDHEVHFTCNPGFRLVGPSSVVCLPNGTWTGEQPHCRG) folds into the Sushi domain. Cystine bridges form between cysteine 81–cysteine 121, cysteine 107–cysteine 134, cysteine 140–cysteine 151, cysteine 145–cysteine 160, cysteine 162–cysteine 171, cysteine 228–cysteine 244, cysteine 240–cysteine 253, cysteine 255–cysteine 268, cysteine 274–cysteine 287, cysteine 281–cysteine 296, and cysteine 301–cysteine 318. Residue asparagine 124 is glycosylated (N-linked (GlcNAc...) asparagine). An EGF-like 1; calcium-binding domain is found at 136-172 (GISECSSQPCQNGGTCVEGVNQYRCICPPGRTGNRCQ). The 46-residue stretch at 224 to 269 (DVNECELYGQEGRPRLCMHACVNTPGSYRCTCPGGYRTLADGKSCE) folds into the EGF-like 2; calcium-binding domain. The region spanning 270–319 (DVDECVGLQPVCPQGTTCINTGGSFQCVSPECPEGSGNVSYVKTSPFQCE) is the EGF-like 3; calcium-binding domain. The N-linked (GlcNAc...) asparagine glycan is linked to asparagine 307.

The protein belongs to the fibulin family. As to quaternary structure, interacts with heparin, FBLN1, FN1 and DSPP. Preferentially binds dental mesenchyme cells and odontoblasts but not dental epithelial cells or nondental cells. Binding requires a heparan sulfate-containing receptor on the cell surface as well as an integrin. N-glycosylated.

The protein localises to the secreted. It localises to the extracellular space. It is found in the extracellular matrix. Its function is as follows. An adhesion molecule that interacts with extracellular matrix molecules in developing teeth and may play important roles in differentiation and maintenance of odontoblasts as well as in dentin formation. This Homo sapiens (Human) protein is Fibulin-7 (FBLN7).